Here is a 478-residue protein sequence, read N- to C-terminus: MTDQRTLGSETAIERDVVVVGAGPAGLMAARTLVAAGRTVAVLEARDRVGGRTWSKTVDGAFLEIGGQWISPDQTELLALVDELGLETYQRYREGESVYLAPDGTRHTYTGSMFPAGESTIVEMEKLVALLDGLVAEIGATEPWAHPAARELDTISFHHWLRQHSDDEAACSNIGIFVAGGMLTKPAHAFSVLQAVLMAASAGSFSNLVDEDFILDRRVVGGMQSVSETMAAELGEDVVFLDTPVRTIRWAGDGGTYAEHVPGTPVTVWSDRLTVRAKDVVVAVPPNLYSRISFEPPLPRLQHQMHQHQSLGLVIKVHAVYETPFWRDKGLSGTGFGAHELSQEVYDNTNHGDPRGTLVGFVSDERADELFGLPAEERRRLILESLSHYLGEEALHPVVYYESDFGSEEWTRGAYAASYDLGGLHRYGAHQRTPVGPIRWACSDLAAEGYQHVDGALRQGRLAAAEVLGAGSLTGAER.

Position 15–70 (15–70) interacts with FAD; it reads RDVVVVGAGPAGLMAARTLVAAGRTVAVLEARDRVGGRTWSKTVDGAFLEIGGQWI.

It belongs to the flavin monoamine oxidase family. FAD serves as cofactor.

The catalysed reaction is putrescine + O2 + H2O = 4-aminobutanal + H2O2 + NH4(+). The chain is Putrescine oxidase (puo) from Kocuria rosea (Deinococcus erythromyxa).